Reading from the N-terminus, the 188-residue chain is ATP synthase subunit b (188 aa).

A helical membrane pass occupies residues 21-41; that stretch reads ILPHLGELIVGIIFAIIIYAV.

The protein belongs to the ATPase B chain family. F-type ATPases have 2 components, F(1) - the catalytic core - and F(0) - the membrane proton channel. F(1) has five subunits: alpha(3), beta(3), gamma(1), delta(1), epsilon(1). F(0) has three main subunits: a(1), b(2) and c(10-14). The alpha and beta chains form an alternating ring which encloses part of the gamma chain. F(1) is attached to F(0) by a central stalk formed by the gamma and epsilon chains, while a peripheral stalk is formed by the delta and b chains.

It is found in the cell membrane. Functionally, f(1)F(0) ATP synthase produces ATP from ADP in the presence of a proton or sodium gradient. F-type ATPases consist of two structural domains, F(1) containing the extramembraneous catalytic core and F(0) containing the membrane proton channel, linked together by a central stalk and a peripheral stalk. During catalysis, ATP synthesis in the catalytic domain of F(1) is coupled via a rotary mechanism of the central stalk subunits to proton translocation. Component of the F(0) channel, it forms part of the peripheral stalk, linking F(1) to F(0). The sequence is that of ATP synthase subunit b from Kineococcus radiotolerans (strain ATCC BAA-149 / DSM 14245 / SRS30216).